The primary structure comprises 471 residues: UDP-N-acetylmuramate--L-alanine ligase (471 aa).

Residue 114-120 coordinates ATP; it reads GTHGKTT.

It belongs to the MurCDEF family.

It localises to the cytoplasm. The enzyme catalyses UDP-N-acetyl-alpha-D-muramate + L-alanine + ATP = UDP-N-acetyl-alpha-D-muramoyl-L-alanine + ADP + phosphate + H(+). The protein operates within cell wall biogenesis; peptidoglycan biosynthesis. Cell wall formation. The polypeptide is UDP-N-acetylmuramate--L-alanine ligase (Rhizobium etli (strain ATCC 51251 / DSM 11541 / JCM 21823 / NBRC 15573 / CFN 42)).